Reading from the N-terminus, the 126-residue chain is Small ribosomal subunit protein uS13 (126 aa).

The segment at 96–126 (LPVHGQRTHTNARTRKGPRRAIAGKKKAGKK) is disordered.

The protein belongs to the universal ribosomal protein uS13 family. In terms of assembly, part of the 30S ribosomal subunit. Forms a loose heterodimer with protein S19. Forms two bridges to the 50S subunit in the 70S ribosome.

In terms of biological role, located at the top of the head of the 30S subunit, it contacts several helices of the 16S rRNA. In the 70S ribosome it contacts the 23S rRNA (bridge B1a) and protein L5 of the 50S subunit (bridge B1b), connecting the 2 subunits; these bridges are implicated in subunit movement. Contacts the tRNAs in the A and P-sites. In Frankia alni (strain DSM 45986 / CECT 9034 / ACN14a), this protein is Small ribosomal subunit protein uS13.